The sequence spans 573 residues: Phosphomethylpyrimidine synthase (573 aa).

Substrate is bound by residues Asn190, Met219, Tyr248, His284, 304 to 306 (SRG), 345 to 348 (DGLR), and Glu384. His388 contributes to the Zn(2+) binding site. Substrate is bound at residue Tyr411. Position 452 (His452) interacts with Zn(2+). The [4Fe-4S] cluster site is built by Cys532, Cys535, and Cys540.

This sequence belongs to the ThiC family. It depends on [4Fe-4S] cluster as a cofactor.

The enzyme catalyses 5-amino-1-(5-phospho-beta-D-ribosyl)imidazole + S-adenosyl-L-methionine = 4-amino-2-methyl-5-(phosphooxymethyl)pyrimidine + CO + 5'-deoxyadenosine + formate + L-methionine + 3 H(+). It functions in the pathway cofactor biosynthesis; thiamine diphosphate biosynthesis. Its function is as follows. Catalyzes the synthesis of the hydroxymethylpyrimidine phosphate (HMP-P) moiety of thiamine from aminoimidazole ribotide (AIR) in a radical S-adenosyl-L-methionine (SAM)-dependent reaction. This chain is Phosphomethylpyrimidine synthase, found in Geobacillus sp. (strain WCH70).